The primary structure comprises 44 residues: Photosystem I reaction center subunit IX (44 aa).

The helical transmembrane segment at 7 to 27 (YLSVAPVASTLWFVALAGLLI) threads the bilayer.

This sequence belongs to the PsaJ family.

Its subcellular location is the plastid. It is found in the chloroplast thylakoid membrane. In terms of biological role, may help in the organization of the PsaE and PsaF subunits. This is Photosystem I reaction center subunit IX from Cicer arietinum (Chickpea).